An 842-amino-acid chain; its full sequence is Alpha-glucan phosphorylase, H isozyme (842 aa).

An N6-(pyridoxal phosphate)lysine modification is found at K688.

The protein belongs to the glycogen phosphorylase family. Pyridoxal 5'-phosphate serves as cofactor.

The protein localises to the cytoplasm. The enzyme catalyses [(1-&gt;4)-alpha-D-glucosyl](n) + phosphate = [(1-&gt;4)-alpha-D-glucosyl](n-1) + alpha-D-glucose 1-phosphate. Functionally, phosphorylase is an important allosteric enzyme in carbohydrate metabolism. Enzymes from different sources differ in their regulatory mechanisms and in their natural substrates. However, all known phosphorylases share catalytic and structural properties. Its function is as follows. The H isoform exhibits higher affinity for branched polyglucans such as soluble starch or glycogen. This is Alpha-glucan phosphorylase, H isozyme from Vicia faba (Broad bean).